The primary structure comprises 352 residues: MTIAIGKTQEKRGLFDVVDDWLRRDRFVFVGWSGLLLFPTAYLALGGWFTGTTFVTSWYTHGLATSYLEGCNFLTAAVSTPANSMGHSLLFLWGPEAQGDFTRWCQLGGLWTFVALHGSFALIGFMLRQFEIARSVKIRPYNAIAFSAPISVFVSVFLIYPLGQSGWFFAPSFGVAAIFRFILFFQGFHNWTLNPFHMMGVAGVLGAALLCAIHGATVENTLFEDGDGANTFRAFNPTQAEETYSMVTANRFWSQIFGVAFSNKRWLHFFMLFVPVTGLWMSAIGVVGLALNLRAYDFVSQEIRAAEDPEFETFYTKNILLNEGIRAWMAAQDQPHEKLVFPEEVLPRGNAL.

Residue threonine 2 is modified to N-acetylthreonine. Position 2 is a phosphothreonine (threonine 2). Residues 40–60 traverse the membrane as a helical segment; sequence TAYLALGGWFTGTTFVTSWYT. Histidine 117 lines the chlorophyll a pocket. A helical membrane pass occupies residues 124-140; sequence GFMLRQFEIARSVKIRP. The pheophytin a site is built by glutamine 129 and asparagine 142. Residues 152–165 form a helical membrane-spanning segment; that stretch reads VFVSVFLIYPLGQS. Histidine 197 is a chlorophyll a binding site. Residues 207 to 227 form a helical membrane-spanning segment; the sequence is AALLCAIHGATVENTLFEDGD. Residues histidine 214 and phenylalanine 261 each contribute to the a plastoquinone site. Histidine 214 provides a ligand contact to Fe cation. Position 268 (histidine 268) interacts with Fe cation. Residues 278 to 294 traverse the membrane as a helical segment; the sequence is GLWMSAIGVVGLALNLR.

This sequence belongs to the reaction center PufL/M/PsbA/D family. As to quaternary structure, PSII is composed of 1 copy each of membrane proteins PsbA, PsbB, PsbC, PsbD, PsbE, PsbF, PsbH, PsbI, PsbJ, PsbK, PsbL, PsbM, PsbT, PsbX, PsbY, PsbZ, Psb30/Ycf12, at least 3 peripheral proteins of the oxygen-evolving complex and a large number of cofactors. It forms dimeric complexes. The D1/D2 heterodimer binds P680, chlorophylls that are the primary electron donor of PSII, and subsequent electron acceptors. It shares a non-heme iron and each subunit binds pheophytin, quinone, additional chlorophylls, carotenoids and lipids. There is also a Cl(-1) ion associated with D1 and D2, which is required for oxygen evolution. The PSII complex binds additional chlorophylls, carotenoids and specific lipids. serves as cofactor.

It is found in the plastid. The protein resides in the chloroplast thylakoid membrane. The enzyme catalyses 2 a plastoquinone + 4 hnu + 2 H2O = 2 a plastoquinol + O2. In terms of biological role, photosystem II (PSII) is a light-driven water:plastoquinone oxidoreductase that uses light energy to abstract electrons from H(2)O, generating O(2) and a proton gradient subsequently used for ATP formation. It consists of a core antenna complex that captures photons, and an electron transfer chain that converts photonic excitation into a charge separation. The D1/D2 (PsbA/PsbD) reaction center heterodimer binds P680, the primary electron donor of PSII as well as several subsequent electron acceptors. D2 is needed for assembly of a stable PSII complex. The chain is Photosystem II D2 protein from Chlorella vulgaris (Green alga).